The chain runs to 206 residues: Platelet glycoprotein Ib beta chain (206 aa).

A signal peptide spans methionine 1–cysteine 26. Disulfide bonds link cysteine 26/cysteine 32 and cysteine 30/cysteine 39. The LRRNT domain maps to proline 27–proline 55. Residues proline 27–cysteine 147 are Extracellular-facing. Residues leucine 60–alanine 83 form an LRR repeat. Asparagine 66 is a glycosylation site (N-linked (GlcNAc...) asparagine). In terms of domain architecture, LRRCT spans asparagine 89–proline 143. Cystine bridges form between cysteine 93/cysteine 118 and cysteine 95/cysteine 141. A helical membrane pass occupies residues tryptophan 148–leucine 172. Residues glycine 173–serine 206 are Cytoplasmic-facing. A phosphoserine mark is found at serine 186 and serine 191. Threonine 193 is subject to Phosphothreonine. At serine 200 the chain carries Phosphoserine.

Two GP-Ib beta are disulfide-linked to one GP-Ib alpha. GP-IX is complexed with the GP-Ib heterodimer via a non covalent linkage. Interacts with TRAF4.

It localises to the membrane. Functionally, gp-Ib, a surface membrane protein of platelets, participates in the formation of platelet plugs by binding to von Willebrand factor, which is already bound to the subendothelium. This Mus musculus (Mouse) protein is Platelet glycoprotein Ib beta chain (Gp1bb).